The chain runs to 402 residues: Pentalenic acid synthase (402 aa).

The tract at residues 1–28 (MTEPGTSVSAPVAFPQDRTCPYDPPTAY) is disordered. Cysteine 351 provides a ligand contact to heme.

This sequence belongs to the cytochrome P450 family. Heme is required as a cofactor.

The catalysed reaction is 1-deoxypentalenate + reduced 2[4Fe-4S]-[ferredoxin] + O2 + 2 H(+) = pentalenate + oxidized 2[4Fe-4S]-[ferredoxin] + H2O. The protein operates within antibiotic biosynthesis; neopentalenolactone biosynthesis. Catalyzes the conversion of 1-deoxypentalenic acid to pentalenic acid in the biosynthesis of neopentalenolactone antibiotic. The protein is Pentalenic acid synthase (cyp28) of Streptomyces avermitilis (strain ATCC 31267 / DSM 46492 / JCM 5070 / NBRC 14893 / NCIMB 12804 / NRRL 8165 / MA-4680).